Here is a 281-residue protein sequence, read N- to C-terminus: Putative E3 ubiquitin-protein ligase SINA-like 6 (281 aa).

The tract at residues 1-26 (MVGVLLSERNGSQKRHCSSISSDDGR) is disordered. The RING-type zinc finger occupies 45-81 (CPICYQALKIPVFQCGNGHLACSSCCPKLRNKCPACA). The SBD stretch occupies residues 95-280 (VLESVLVPCR…MMLCINELKQ (186 aa)). The SIAH-type zinc finger occupies 98–156 (SVLVPCRYADLGCTKTIYYGRESTHEKICNFSPCSCPVQGCNYTGSYKDLYEHYDLTHS). 8 residues coordinate Zn(2+): Cys-103, Cys-110, His-122, Cys-126, Cys-133, Cys-138, His-150, and His-155.

It belongs to the SINA (Seven in absentia) family.

It catalyses the reaction S-ubiquitinyl-[E2 ubiquitin-conjugating enzyme]-L-cysteine + [acceptor protein]-L-lysine = [E2 ubiquitin-conjugating enzyme]-L-cysteine + N(6)-ubiquitinyl-[acceptor protein]-L-lysine.. It functions in the pathway protein modification; protein ubiquitination. Its function is as follows. E3 ubiquitin-protein ligase that mediates ubiquitination and subsequent proteasomal degradation of target proteins. E3 ubiquitin ligases accept ubiquitin from an E2 ubiquitin-conjugating enzyme in the form of a thioester and then directly transfers the ubiquitin to targeted substrates. It probably triggers the ubiquitin-mediated degradation of different substrates. The sequence is that of Putative E3 ubiquitin-protein ligase SINA-like 6 from Arabidopsis thaliana (Mouse-ear cress).